The chain runs to 425 residues: Serine--tRNA ligase (425 aa).

L-serine is bound at residue 233–235 (TAE). Residues 264-266 (RRE) and V280 each bind ATP. Residue E287 coordinates L-serine. Residue 351–354 (EVSS) coordinates ATP. S387 lines the L-serine pocket.

The protein belongs to the class-II aminoacyl-tRNA synthetase family. Type-1 seryl-tRNA synthetase subfamily. As to quaternary structure, homodimer. The tRNA molecule binds across the dimer.

The protein resides in the cytoplasm. The enzyme catalyses tRNA(Ser) + L-serine + ATP = L-seryl-tRNA(Ser) + AMP + diphosphate + H(+). It catalyses the reaction tRNA(Sec) + L-serine + ATP = L-seryl-tRNA(Sec) + AMP + diphosphate + H(+). The protein operates within aminoacyl-tRNA biosynthesis; selenocysteinyl-tRNA(Sec) biosynthesis; L-seryl-tRNA(Sec) from L-serine and tRNA(Sec): step 1/1. Functionally, catalyzes the attachment of serine to tRNA(Ser). Is also able to aminoacylate tRNA(Sec) with serine, to form the misacylated tRNA L-seryl-tRNA(Sec), which will be further converted into selenocysteinyl-tRNA(Sec). This is Serine--tRNA ligase from Gemmatimonas aurantiaca (strain DSM 14586 / JCM 11422 / NBRC 100505 / T-27).